The primary structure comprises 266 residues: Small ribosomal subunit protein uS2 (266 aa).

It belongs to the universal ribosomal protein uS2 family.

In Corynebacterium diphtheriae (strain ATCC 700971 / NCTC 13129 / Biotype gravis), this protein is Small ribosomal subunit protein uS2.